A 581-amino-acid chain; its full sequence is Probable peptidoglycan D,D-transpeptidase PenA (581 aa).

The chain crosses the membrane as a helical span at residues 28–48 (ISFVLMAIAVLFAGLIARGLY). The Acyl-ester intermediate role is filled by S310.

The protein belongs to the transpeptidase family. FtsI subfamily.

The protein localises to the cell inner membrane. It catalyses the reaction Preferential cleavage: (Ac)2-L-Lys-D-Ala-|-D-Ala. Also transpeptidation of peptidyl-alanyl moieties that are N-acyl substituents of D-alanine.. It participates in cell wall biogenesis; peptidoglycan biosynthesis. In terms of biological role, catalyzes cross-linking of the peptidoglycan cell wall at the division septum. This Neisseria meningitidis serogroup A / serotype 4A (strain DSM 15465 / Z2491) protein is Probable peptidoglycan D,D-transpeptidase PenA.